The sequence spans 295 residues: Trimeric intracellular cation channel type 1B.1 (295 aa).

Topologically, residues 1-27 are lumenal; it reads MVVPESFQLDQEILLDAGAQLHRLKMY. A helical membrane pass occupies residues 28-45; it reads PYFDVAHYLLMIIEVRDD. Residues 46–56 are Cytoplasmic-facing; that stretch reads LGSAASIFSRK. Residues 57–80 traverse the membrane as a discontinuously helical segment; sequence HPLSCWLSSMLMCFADAFLANFLL. Over 81-89 the chain is Lumenal; it reads GEPVIAPFK. Residues 90-107 form a helical membrane-spanning segment; sequence RHDDIILATIIWYLVFYA. Residues 108-119 lie on the Cytoplasmic side of the membrane; that stretch reads PFDGIYKIAKIT. Residues 120 to 148 traverse the membrane as a helical segment; that stretch reads PVKCVLAVMKEVKRAYKVSHGVSHAAKLY. A 1,2-diacyl-sn-glycero-3-phospho-(1D-myo-inositol-4,5-bisphosphate) is bound by residues Lys-129 and Arg-133. Residues 149–150 are Lumenal-facing; sequence PN. The chain crosses the membrane as a discontinuously helical span at residues 151–177; sequence SYIVQVLVGTAKGAGSGIVRTLEQLVR. Residue Ser-166 participates in a 1,2-diacyl-sn-glycero-3-phospho-(1D-myo-inositol-4,5-bisphosphate) binding. Over 178–188 the chain is Cytoplasmic; the sequence is GVWLPTHNELL. A helical transmembrane segment spans residues 189-210; that stretch reads RPSFATKACVVAASVLALEKSG. The Lumenal segment spans residues 211 to 215; that stretch reads TYLTA. Residues 216–239 form a helical membrane-spanning segment; that stretch reads PHDLVYLVIVGFFVYFKLSAVILH. Residues 240-295 are Cytoplasmic-facing; the sequence is VTDPFAPIENLFCAIFMGGIWDAVSRALAASRDRRAAGAHSNENGSSISTPEKKDQ. A disordered region spans residues 274–295; that stretch reads RAAGAHSNENGSSISTPEKKDQ.

Belongs to the TMEM38 family. Homotrimer; trimerization probably requires binding to phosphatidylinositol 4,5-bisphosphate (PIP2).

The protein resides in the endoplasmic reticulum membrane. In terms of biological role, potassium channel that mediates transmembrane potassium transport. Might be required for maintenance of rapid intracellular calcium release. May act as a counter-ion channel that functions in synchronization with calcium release from intracellular stores. Binds phosphatidylinositol 4,5-bisphosphate (PIP2). This is Trimeric intracellular cation channel type 1B.1 from Caenorhabditis elegans.